Consider the following 360-residue polypeptide: Membrane-bound lytic murein transglycosylase C (360 aa).

The first 16 residues, 1–16, serve as a signal peptide directing secretion; sequence MKKLLALAVIAPLLIS. Cys17 carries the N-palmitoyl cysteine lipid modification. Residue Cys17 is the site of S-diacylglycerol cysteine attachment.

Belongs to the transglycosylase Slt family.

The protein resides in the cell outer membrane. The enzyme catalyses Exolytic cleavage of the (1-&gt;4)-beta-glycosidic linkage between N-acetylmuramic acid (MurNAc) and N-acetylglucosamine (GlcNAc) residues in peptidoglycan, from either the reducing or the non-reducing ends of the peptidoglycan chains, with concomitant formation of a 1,6-anhydrobond in the MurNAc residue.. Its function is as follows. Murein-degrading enzyme. May play a role in recycling of muropeptides during cell elongation and/or cell division. In Salmonella paratyphi A (strain ATCC 9150 / SARB42), this protein is Membrane-bound lytic murein transglycosylase C.